Here is a 394-residue protein sequence, read N- to C-terminus: Elongation factor Tu (394 aa).

The tr-type G domain occupies 10-205; that stretch reads KPHVNIGTIG…VDNWIPLPPR (196 aa). A G1 region spans residues 19–26; the sequence is GHVDHGKT. 19–26 is a GTP binding site; sequence GHVDHGKT. Residue Thr-26 coordinates Mg(2+). Positions 60–64 are G2; it reads GITIN. Positions 81 to 84 are G3; sequence DCPG. Residues 81–85 and 136–139 contribute to the GTP site; these read DCPGH and NKCD. Residues 136–139 form a G4 region; that stretch reads NKCD. The interval 174-176 is G5; that stretch reads SAL.

It belongs to the TRAFAC class translation factor GTPase superfamily. Classic translation factor GTPase family. EF-Tu/EF-1A subfamily. In terms of assembly, monomer.

The protein resides in the cytoplasm. It catalyses the reaction GTP + H2O = GDP + phosphate + H(+). GTP hydrolase that promotes the GTP-dependent binding of aminoacyl-tRNA to the A-site of ribosomes during protein biosynthesis. This Bacteroides thetaiotaomicron (strain ATCC 29148 / DSM 2079 / JCM 5827 / CCUG 10774 / NCTC 10582 / VPI-5482 / E50) protein is Elongation factor Tu.